The chain runs to 777 residues: Histone-lysine N-methyltransferase set9 (777 aa).

Residues 117 to 231 (CPFEVNATNR…VGEEITVTYS (115 aa)) enclose the SET domain. Disordered regions lie at residues 263-414 (AVQK…ILSP) and 682-718 (RMGSKGKQGSSAPSTKGTPAGEKNEQSAKQEQSQGQY). Polar residues predominate over residues 291 to 301 (TALQASRTPSV). Over residues 323–337 (TSTTDSAAQGAGADG) the composition is skewed to low complexity. Polar residues-rich tracts occupy residues 371 to 405 (TAPSRGSSDNETSKSPLSFSTTNDNVTDATSQGSE) and 688 to 698 (KQGSSAPSTKG).

The protein belongs to the class V-like SAM-binding methyltransferase superfamily. Histone-lysine methyltransferase family. Suvar4-20 subfamily.

It is found in the nucleus. Its subcellular location is the chromosome. The catalysed reaction is L-lysyl(20)-[histone H4] + 3 S-adenosyl-L-methionine = N(6),N(6),N(6)-trimethyl-L-lysyl(20)-[histone H4] + 3 S-adenosyl-L-homocysteine + 3 H(+). Histone methyltransferase that trimethylates 'Lys-20' of histone H4 to form H4K20me3. The sequence is that of Histone-lysine N-methyltransferase set9 (hlm-1) from Neurospora crassa (strain ATCC 24698 / 74-OR23-1A / CBS 708.71 / DSM 1257 / FGSC 987).